A 1685-amino-acid polypeptide reads, in one-letter code: MSLPFYQRCHQHYDLSYRNKDVRSTVSHYQREKKRSAVYTQGSTAYSSRSSAAHRRESEAFRRASASSSQQQASQHALSSEVSRKAASAYDYGSSHGLTDSSLLLDDYSSKLSPKPKRAKHSLLSGEEKENLPSDYMVPIFSGRQKHVSGITDTEEERIKEAAAYIAQRNLLASEEGITTSKQSTASKQTTASKQSTASKQSTASKQSTASRQSTASRQSVVSKQATSALQQEETSEKKSRKVVIREKAERLSLRKTLEETETYHAKLNEDHLLHAPEFIIKPRSHTVWEKENVKLHCSIAGWPEPRVTWYKNQVPINVHANPGKYIIESRYGMHTLEINGCDFEDTAQYRASAMNVKGELSAYASVVVKRYKGEFDETRFHAGASTMPLSFGVTPYGYASRFEIHFDDKFDVSFGREGETMSLGCRVVITPEIKHFQPEIQWYRNGVPLSPSKWVQTLWSGERATLTFSHLNKEDEGLYTIRVRMGEYYEQYSAYVFVRDADAEIEGAPAAPLDVKCLEANKDYIIISWKQPAVDGGSPILGYFIDKCEVGTDSWSQCNDTPVKFARFPVTGLIEGRSYIFRVRAVNKMGIGFPSRVSEPVAALDPAEKARLKSRPSAPWTGQIIVTEEEPSEGIVPGPPTDLSVTEATRSYVVLSWKPPGQRGHEGIMYFVEKCEAGTENWQRVNTELPVKSPRFALFDLAEGKSYCFRVRCSNSAGVGEPSEATEVTVVGDKLDIPKAPGKIIPSRNTDTSVVVSWEESKDAKELVGYYIEASVAGSGKWEPCNNNPVKGSRFTCHGLVTGQSYIFRVRAVNAAGLSEYSQDSEAIEVKAAIGGGVSPDVCPALSDEPGGLTASRGRVHEASPPTFQKDALLGSKPNKPSLPSSSQNLGQTEVSKVSETVQEELTPPPQKAAPQGKSKSDPLKKKTDRAPPSPPCDITCLESFRDSMVLGWKQPDKIGGAEITGYYVNYREVIDGVPGKWREANVKAVSEEAYKISNLKENMVYQFQVAAMNMAGLGAPSAVSECFKCEEWTIAVPGPPHSLKCSEVRKDSLVLQWKPPVHSGRTPVTGYFVDLKEAKAKEDQWRGLNEAAIKNVYLKVRGLKEGVSYVFRVRAINQAGVGKPSDLAGPVVAETRPGTKEVVVNVDDDGVISLNFECDKMTPKSEFSWSKDYVSTEDSPRLEVESKGNKTKMTFKDLGMDDLGIYSCDVTDTDGIASSYLIDEEELKRLLALSHEHKFPTVPVKSELAVEILEKGQVRFWMQAEKLSGNAKVNYIFNEKEIFEGPKYKMHIDRNTGIIEMFMEKLQDEDEGTYTFQLQDGKATNHSTVVLVGDVFKKLQKEAEFQRQEWIRKQGPHFVEYLSWEVTGECNVLLKCKVANIKKETHIVWYKDEREISVDEKHDFKDGICTLLITEFSKKDAGIYEVILKDDRGKDKSRLKLVDEAFKELMMEVCKKIALSATDLKIQSTAEGIQLYSFVTYYVEDLKVNWSHNGSAIRYSDRVKTGVTGEQIWLQINEPTPNDKGKYVMELFDGKTGHQKTVDLSGQAYDEAYAEFQRLKQAAIAEKNRARVLGGLPDVVTIQEGKALNLTCNVWGDPPPEVSWLKNEKALASDDHCNLKFEAGRTAYFTINGVSTADSGKYGLVVKNKYGSETSDFTVSVFIPEEEARMAALESLKGGKKAK.

A disordered region spans residues 33–80 (KKRSAVYTQGSTAYSSRSSAAHRRESEAFRRASASSSQQQASQHALSS). 2 stretches are compositionally biased toward low complexity: residues 41–51 (QGSTAYSSRSS) and 63–80 (RASA…ALSS). At serine 113 the chain carries Phosphoserine. The disordered stretch occupies residues 177-244 (GITTSKQSTA…TSEKKSRKVV (68 aa)). The span at 179–220 (TTSKQSTASKQTTASKQSTASKQSTASKQSTASRQSTASRQS) shows a compositional bias: low complexity. Tandem repeats lie at residues 182–187 (KQSTAS), 188–193 (KQTTAS), 194–199 (KQSTAS), 200–205 (KQSTAS), 206–211 (KQSTAS), and 212–217 (RQSTAS). Positions 182-217 (KQSTASKQTTASKQSTASKQSTASKQSTASRQSTAS) are 6 X 6 AA tandem repeats. Over residues 221-233 (VVSKQATSALQQE) the composition is skewed to polar residues. 2 consecutive Ig-like C2-type domains span residues 277–368 (PEFI…ASVV) and 396–498 (PYGY…AYVF). Fibronectin type-III domains lie at 512 to 607 (APLD…ALDP), 640 to 734 (PPTD…VVGD), and 741 to 834 (APGK…VKAA). The disordered stretch occupies residues 840–938 (SPDVCPALSD…TDRAPPSPPC (99 aa)). Over residues 874–888 (LLGSKPNKPSLPSSS) the composition is skewed to low complexity. Residues serine 883 and serine 887 each carry the phosphoserine modification. The span at 889–902 (QNLGQTEVSKVSET) shows a compositional bias: polar residues. Positions 920–931 (SKSDPLKKKTDR) are enriched in basic and acidic residues. 2 consecutive Fibronectin type-III domains span residues 933–1034 (PPSP…CEEW) and 1041–1140 (PPHS…TRPG). Phosphoserine is present on serine 1054. Ig-like C2-type domains are found at residues 1132 to 1230 (PVVA…EELK), 1358 to 1444 (PHFV…LKLV), and 1573 to 1662 (RVLG…FTVS). Cysteines 1160 and 1210 form a disulfide.

Homodimer. Interacts with TTN/titin. Interacts with PNKD.

The protein resides in the cytoplasm. The protein localises to the myofibril. Its subcellular location is the sarcomere. It is found in the m line. In terms of biological role, major component of the vertebrate myofibrillar M band. Binds myosin, titin, and light meromyosin. This binding is dose dependent. This Homo sapiens (Human) protein is Myomesin-1 (MYOM1).